Here is a 201-residue protein sequence, read N- to C-terminus: 3-isopropylmalate dehydratase small subunit (201 aa).

Belongs to the LeuD family. LeuD type 1 subfamily. Heterodimer of LeuC and LeuD.

It carries out the reaction (2R,3S)-3-isopropylmalate = (2S)-2-isopropylmalate. It functions in the pathway amino-acid biosynthesis; L-leucine biosynthesis; L-leucine from 3-methyl-2-oxobutanoate: step 2/4. In terms of biological role, catalyzes the isomerization between 2-isopropylmalate and 3-isopropylmalate, via the formation of 2-isopropylmaleate. In Salmonella arizonae (strain ATCC BAA-731 / CDC346-86 / RSK2980), this protein is 3-isopropylmalate dehydratase small subunit.